A 691-amino-acid polypeptide reads, in one-letter code: DNA ligase (691 aa).

NAD(+)-binding positions include 41–45, 90–91, and E130; these read DAEYD and SL. K132 (N6-AMP-lysine intermediate) is an active-site residue. NAD(+)-binding residues include R153, E190, K307, and K331. Positions 425, 428, 443, and 449 each coordinate Zn(2+). Residues 610–691 form the BRCT domain; it reads APQGVLAGKT…MHTLLEGHAR (82 aa).

This sequence belongs to the NAD-dependent DNA ligase family. LigA subfamily. Mg(2+) serves as cofactor. It depends on Mn(2+) as a cofactor.

It carries out the reaction NAD(+) + (deoxyribonucleotide)n-3'-hydroxyl + 5'-phospho-(deoxyribonucleotide)m = (deoxyribonucleotide)n+m + AMP + beta-nicotinamide D-nucleotide.. In terms of biological role, DNA ligase that catalyzes the formation of phosphodiester linkages between 5'-phosphoryl and 3'-hydroxyl groups in double-stranded DNA using NAD as a coenzyme and as the energy source for the reaction. It is essential for DNA replication and repair of damaged DNA. This Burkholderia mallei (strain NCTC 10247) protein is DNA ligase.